The primary structure comprises 366 residues: Probable trehalose-phosphate phosphatase 3 (366 aa).

The protein belongs to the trehalose phosphatase family. A divalent metal cation serves as cofactor.

It carries out the reaction alpha,alpha-trehalose 6-phosphate + H2O = alpha,alpha-trehalose + phosphate. The protein operates within glycan biosynthesis; trehalose biosynthesis. In terms of biological role, removes the phosphate from trehalose 6-phosphate to produce free trehalose. Trehalose accumulation in plant may improve abiotic stress tolerance. The polypeptide is Probable trehalose-phosphate phosphatase 3 (TPP3) (Oryza sativa subsp. japonica (Rice)).